Consider the following 437-residue polypeptide: Phosphomethylpyrimidine synthase (437 aa).

Substrate contacts are provided by residues Asn-69, Met-98, Tyr-127, His-163, Ser-185–Gly-187, Asp-226–Arg-229, and Glu-265. Zn(2+) is bound at residue His-269. Tyr-292 is a binding site for substrate. Zn(2+) is bound at residue His-333. [4Fe-4S] cluster is bound by residues Cys-409, Cys-412, and Cys-416.

This sequence belongs to the ThiC family. [4Fe-4S] cluster is required as a cofactor.

The enzyme catalyses 5-amino-1-(5-phospho-beta-D-ribosyl)imidazole + S-adenosyl-L-methionine = 4-amino-2-methyl-5-(phosphooxymethyl)pyrimidine + CO + 5'-deoxyadenosine + formate + L-methionine + 3 H(+). It participates in cofactor biosynthesis; thiamine diphosphate biosynthesis. Functionally, catalyzes the synthesis of the hydroxymethylpyrimidine phosphate (HMP-P) moiety of thiamine from aminoimidazole ribotide (AIR) in a radical S-adenosyl-L-methionine (SAM)-dependent reaction. The polypeptide is Phosphomethylpyrimidine synthase (Clostridium kluyveri (strain NBRC 12016)).